The chain runs to 94 residues: Co-chaperonin GroES (94 aa).

The protein belongs to the GroES chaperonin family. Heptamer of 7 subunits arranged in a ring. Interacts with the chaperonin GroEL.

The protein localises to the cytoplasm. Together with the chaperonin GroEL, plays an essential role in assisting protein folding. The GroEL-GroES system forms a nano-cage that allows encapsulation of the non-native substrate proteins and provides a physical environment optimized to promote and accelerate protein folding. GroES binds to the apical surface of the GroEL ring, thereby capping the opening of the GroEL channel. This Lactobacillus helveticus (strain DPC 4571) protein is Co-chaperonin GroES.